The primary structure comprises 213 residues: Adenylate kinase (213 aa).

Residue 10–15 participates in ATP binding; it reads GAGKGT. The tract at residues 30-59 is NMP; it reads STGDMFRAAMANQTEMGILAKSYIDKGDLV. AMP-binding positions include threonine 31, arginine 36, 57-59, 86-89, and glutamine 93; these read DLV and GYPR. Positions 127-160 are LID; it reads GRIIHKETGETFHKVFNPPVGDYKEEDFYQREDD. ATP-binding positions include arginine 128 and 137–138; that span reads TF. Positions 157 and 168 each coordinate AMP. Glutamine 196 serves as a coordination point for ATP.

It belongs to the adenylate kinase family. Monomer.

The protein resides in the cytoplasm. It catalyses the reaction AMP + ATP = 2 ADP. The protein operates within purine metabolism; AMP biosynthesis via salvage pathway; AMP from ADP: step 1/1. Its function is as follows. Catalyzes the reversible transfer of the terminal phosphate group between ATP and AMP. Plays an important role in cellular energy homeostasis and in adenine nucleotide metabolism. The sequence is that of Adenylate kinase from Streptococcus suis (strain 98HAH33).